The following is a 219-amino-acid chain: Mucosal pentraxin (219 aa).

The first 19 residues, 1–19, serve as a signal peptide directing secretion; the sequence is MEKLIVGTLLLTVLSGGIS. The region spanning 24–219 is the Pentraxin (PTX) domain; the sequence is DGKAFIFPQE…YVVTKPKLWT (196 aa). Cys55 and Cys114 are oxidised to a cystine. Residues Asp77, Asn78, Glu155, Gln156, Asp157, and Gln167 each coordinate Ca(2+).

Belongs to the pentraxin family. As to quaternary structure, homopentamer. Pentraxin (or pentaxin) have a discoid arrangement of 5 non-covalently bound subunits. It depends on Ca(2+) as a cofactor. In terms of tissue distribution, expression is restricted to small intestine, stomach and colon. Within colon, expressed in epithelial cells located within the lower to mid region of transverse and distal crypts, but not in proximal colon.

The protein localises to the secreted. The protein is Mucosal pentraxin (Mptx1) of Rattus norvegicus (Rat).